A 202-amino-acid polypeptide reads, in one-letter code: Imidazoleglycerol-phosphate dehydratase (202 aa).

It belongs to the imidazoleglycerol-phosphate dehydratase family.

Its subcellular location is the cytoplasm. It carries out the reaction D-erythro-1-(imidazol-4-yl)glycerol 3-phosphate = 3-(imidazol-4-yl)-2-oxopropyl phosphate + H2O. It participates in amino-acid biosynthesis; L-histidine biosynthesis; L-histidine from 5-phospho-alpha-D-ribose 1-diphosphate: step 6/9. The chain is Imidazoleglycerol-phosphate dehydratase from Rhizobium leguminosarum bv. trifolii (strain WSM2304).